Here is a 319-residue protein sequence, read N- to C-terminus: Acetyl esterase (319 aa).

Residues 91–93 (HGG) carry the Involved in the stabilization of the negatively charged intermediate by the formation of the oxyanion hole motif. Catalysis depends on residues Ser-165, Asp-262, and His-292.

This sequence belongs to the 'GDXG' lipolytic enzyme family. As to quaternary structure, homodimer. Interacts with MalT and MelA.

It is found in the cytoplasm. Its function is as follows. Displays esterase activity towards short chain fatty esters (acyl chain length of up to 8 carbons). Able to hydrolyze triacetylglycerol (triacetin) and tributyrylglycerol (tributyrin), but not trioleylglycerol (triolein) or cholesterol oleate. Negatively regulates MalT activity by antagonizing maltotriose binding. Inhibits MelA galactosidase activity. This chain is Acetyl esterase, found in Escherichia coli O17:K52:H18 (strain UMN026 / ExPEC).